The sequence spans 110 residues: DNA-binding protein Tneu_1679 (110 aa).

Belongs to the PDCD5 family.

This chain is DNA-binding protein Tneu_1679, found in Pyrobaculum neutrophilum (strain DSM 2338 / JCM 9278 / NBRC 100436 / V24Sta) (Thermoproteus neutrophilus).